Consider the following 1262-residue polypeptide: Zinc finger protein 592 (1262 aa).

The interval 23-45 (SLDAKEAIQAPSEENESPLKSSG) is disordered. 4 positions are modified to phosphoserine: S78, S142, S145, and S146. Disordered regions lie at residues 122-174 (SFTS…PPPG), 200-278 (KKEP…AHSK), and 294-494 (VANV…ASTP). Glycyl lysine isopeptide (Lys-Gly) (interchain with G-Cter in SUMO2) cross-links involve residues K200 and K204. 2 stretches are compositionally biased toward basic and acidic residues: residues 213-232 (QQEH…DLDS) and 298-308 (TKEDQPGHTKD). Over residues 343–367 (PSDSPRSICSDSSSKGSPSVAASSP) the composition is skewed to low complexity. Residues 454 to 463 (IKTSDSSSPC) are compositionally biased toward polar residues. The span at 484-494 (QQSTAPQASTP) shows a compositional bias: low complexity. S529 carries the phosphoserine modification. K546 participates in a covalent cross-link: Glycyl lysine isopeptide (Lys-Gly) (interchain with G-Cter in SUMO2). The residue at position 573 (S573) is a Phosphoserine. Residues 587–612 (YCCLECGDAFALEKSLSQHYSRRSVH) form a C2H2-type 1; atypical zinc finger. Residues 615–639 (VLCTLCSKTLLFFNKCSLLRHARDH) form a C2H2-type 2; atypical zinc finger. Phosphoserine is present on S691. The C2H2-type 3; degenerate zinc-finger motif lies at 711–731 (TKCPECHKQMRDYMVLATHFQ). Residues 740-764 (LTCQVCQMLLPNQCSFCAHQRIHAH) form a C2H2-type 4 zinc finger. The C2H2-type 5; atypical zinc-finger motif lies at 768-790 (YCCPECGVLCRSAYFQTHVKENC). C2H2-type zinc fingers lie at residues 799–822 (YRCI…QERH), 827–850 (HKCA…TTQH), and 892–915 (FKCP…KNTH). The span at 924–935 (LSSLQSSTDTSS) shows a compositional bias: low complexity. The tract at residues 924–979 (LSSLQSSTDTSSNRPGSRAPAEPPATNVAARGSSLTAGRWGRPEAHRRAEARPRMR) is disordered. Residues 964–976 (GRPEAHRRAEARP) are compositionally biased toward basic and acidic residues. 2 consecutive C2H2-type zinc fingers follow at residues 983–1006 (WTCQ…KKSH) and 1013–1036 (YPCR…RNNH). The segment at 1043–1069 (YTCGYCTEDSPSFPRPSLLESHISLMH) adopts a C2H2-type 11; atypical zinc-finger fold. Position 1089 is a phosphoserine (S1089). The C2H2-type 12; atypical zinc-finger motif lies at 1124–1146 (FQCAKCTFATDSELEFQSHIPQH). The C2H2-type 13 zinc finger occupies 1153–1176 (AQCLLCGLCYTSTSSLNRHLFIVH). Residues S1198 and S1202 each carry the phosphoserine modification. The tract at residues 1222 to 1262 (PLVTDLGGQQGLALDEDSAQDPQNQPQASQDQNSHALSPQV) is disordered. Positions 1241–1262 (QDPQNQPQASQDQNSHALSPQV) are enriched in polar residues.

This sequence belongs to the krueppel C2H2-type zinc-finger protein family. Interacts with ZMYND8. In terms of tissue distribution, expressed in the brain.

It is found in the nucleus. May be involved in transcriptional regulation. This is Zinc finger protein 592 (Znf592) from Mus musculus (Mouse).